The following is a 407-amino-acid chain: SERPINE1 mRNA-binding protein 1 (407 aa).

Position 25 is a phosphoserine (Ser25). Residues Ala33 to Val227 are disordered. Low complexity predominate over residues Ala51–Lys68. Lys52 carries the N6-acetyllysine; alternate modification. Residue Lys52 forms a Glycyl lysine isopeptide (Lys-Gly) (interchain with G-Cter in SUMO1); alternate linkage. The residue at position 68 (Lys68) is an N6-acetyllysine. 3 stretches are compositionally biased toward basic and acidic residues: residues Leu70–Asn80, Val89–Asp114, and Lys122–Ile162. Lys102 participates in a covalent cross-link: Glycyl lysine isopeptide (Lys-Gly) (interchain with G-Cter in SUMO1); alternate. Residue Lys102 forms a Glycyl lysine isopeptide (Lys-Gly) (interchain with G-Cter in SUMO2) linkage. Lys102 is covalently cross-linked (Glycyl lysine isopeptide (Lys-Gly) (interchain with G-Cter in SUMO2); alternate). N6-acetyllysine is present on residues Lys122 and Lys140. Residues Gly164–Gly182 are compositionally biased toward gly residues. 2 positions are modified to omega-N-methylarginine: Arg165 and Arg188. A compositionally biased stretch (basic and acidic residues) spans Asp183–Ser199. Phosphoserine occurs at positions 197, 199, 203, 205, and 208. Lys211 is subject to N6-acetyllysine; alternate. Lys211 is covalently cross-linked (Glycyl lysine isopeptide (Lys-Gly) (interchain with G-Cter in SUMO2); alternate). Position 216 is an omega-N-methylarginine (Arg216). At Ser221 the chain carries Phosphoserine. A Phosphothreonine modification is found at Thr226. Lys228 participates in a covalent cross-link: Glycyl lysine isopeptide (Lys-Gly) (interchain with G-Cter in SUMO1); alternate. A Glycyl lysine isopeptide (Lys-Gly) (interchain with G-Cter in SUMO2); alternate cross-link involves residue Lys228. Ser234 carries the phosphoserine modification. Over residues Ile242–Glu256 the composition is skewed to polar residues. Disordered regions lie at residues Ile242–Glu291 and Ser327–Ala407. Positions Gly261 to Asn274 are enriched in basic and acidic residues. A Glycyl lysine isopeptide (Lys-Gly) (interchain with G-Cter in SUMO1); alternate cross-link involves residue Lys280. A Glycyl lysine isopeptide (Lys-Gly) (interchain with G-Cter in SUMO2) cross-link involves residue Lys280. Residue Lys280 forms a Glycyl lysine isopeptide (Lys-Gly) (interchain with G-Cter in SUMO2); alternate linkage. Composition is skewed to basic and acidic residues over residues Glu281 to Glu291 and Ser327 to His341. N6-acetyllysine is present on Lys328. Ser329 carries the post-translational modification Phosphoserine. Gly residues predominate over residues Gly362–Gly371. Omega-N-methylarginine is present on residues Arg363, Arg366, and Arg369. 2 positions are modified to phosphoserine: Ser391 and Ser393.

This sequence belongs to the SERBP1-HABP4 family. In terms of assembly, associates with mature 80S ribosomes. Interacts with EEF2/eEF2; interaction sequesters EEF2/eEF2 at the A-site of the ribosome, thereby blocking the interaction sites of the mRNA-tRNA complex, promoting ribosome stabilization and hibernation. Interacts with SPIN1. Interacts with CHD3 and TDRD3. Interacts with ZDHHC17 (via ANK repeats). In terms of processing, phosphorylation by MTOR inhibits SERBP1 and relieves ribosome hibernation.

In terms of biological role, ribosome-binding protein that promotes ribosome hibernation, a process during which ribosomes are stabilized in an inactive state and preserved from proteasomal degradation. Acts via its association with EEF2/eEF2 factor, sequestering EEF2/eEF2 at the A-site of the ribosome and promoting ribosome stabilization and storage in an inactive state. May also play a role in the regulation of mRNA stability: binds to the 3'-most 134 nt of the SERPINE1/PAI1 mRNA, a region which confers cyclic nucleotide regulation of message decay. Seems to play a role in PML-nuclear bodies formation. This Oryctolagus cuniculus (Rabbit) protein is SERPINE1 mRNA-binding protein 1.